We begin with the raw amino-acid sequence, 213 residues long: Thiamine-phosphate synthase (213 aa).

Residues 38-42 (QLRIK) and N70 contribute to the 4-amino-2-methyl-5-(diphosphooxymethyl)pyrimidine site. Positions 71 and 90 each coordinate Mg(2+). S109 serves as a coordination point for 4-amino-2-methyl-5-(diphosphooxymethyl)pyrimidine. 2-[(2R,5Z)-2-carboxy-4-methylthiazol-5(2H)-ylidene]ethyl phosphate is bound at residue 135-137 (TQT). K138 contacts 4-amino-2-methyl-5-(diphosphooxymethyl)pyrimidine. Residues G168 and 188-189 (VS) each bind 2-[(2R,5Z)-2-carboxy-4-methylthiazol-5(2H)-ylidene]ethyl phosphate.

Belongs to the thiamine-phosphate synthase family. It depends on Mg(2+) as a cofactor.

The catalysed reaction is 2-[(2R,5Z)-2-carboxy-4-methylthiazol-5(2H)-ylidene]ethyl phosphate + 4-amino-2-methyl-5-(diphosphooxymethyl)pyrimidine + 2 H(+) = thiamine phosphate + CO2 + diphosphate. It catalyses the reaction 2-(2-carboxy-4-methylthiazol-5-yl)ethyl phosphate + 4-amino-2-methyl-5-(diphosphooxymethyl)pyrimidine + 2 H(+) = thiamine phosphate + CO2 + diphosphate. It carries out the reaction 4-methyl-5-(2-phosphooxyethyl)-thiazole + 4-amino-2-methyl-5-(diphosphooxymethyl)pyrimidine + H(+) = thiamine phosphate + diphosphate. It participates in cofactor biosynthesis; thiamine diphosphate biosynthesis; thiamine phosphate from 4-amino-2-methyl-5-diphosphomethylpyrimidine and 4-methyl-5-(2-phosphoethyl)-thiazole: step 1/1. Functionally, condenses 4-methyl-5-(beta-hydroxyethyl)thiazole monophosphate (THZ-P) and 2-methyl-4-amino-5-hydroxymethyl pyrimidine pyrophosphate (HMP-PP) to form thiamine monophosphate (TMP). The polypeptide is Thiamine-phosphate synthase (Pectobacterium atrosepticum (strain SCRI 1043 / ATCC BAA-672) (Erwinia carotovora subsp. atroseptica)).